Reading from the N-terminus, the 1040-residue chain is MSEQERIQDCLRKEIRSLLISTKDGLTPQQLEKEYLLMVGNHLPLRILGYRSTMELVLDMPDVVSVCPGGDGTVILKAIPDESTKGIASLVAKQRRSHKVRNSMPKGRPSICSGRVPYRGRVPPILPAVVKSELKDLLALSPVLLSDFEKAFARRFGRSFQYMQYGFLSMFEVLNAASDVISVEQTRAGSLLTLKKSVSEDKQRGWPAGKVFTQPFRMKQQGSYSTGFPVMKAHFSQPISNMEPPKQVLSMAKTPTFNSVEASRLNHTEKLNQLESTFKSVIAQIGPGGTVDPELKRKIQFVVSKFPQGLFISKLLGEFELTFKEQLSPKQLGFLNVTELVGALSDILRVEFSEERQDLLVFDADLKPLPSGGPLSSVRNSCLVQPDKKTEANPWTSSLSRNSLSTVAVKKTTWDCPLKNQKEPEQKIYKKPNLVVKPLQLQVETNKPQLSLSVANHDIPPDAVRAKKLCRLPPLDTSTLVGVFVEYIISPSQFYIRIYSRDSSELLEDMMIEMRRCYSNQLVSDRYIMPEYFIQPGHLCCVKISEDKWWYRVIIHRILGKKEVEVFYPDFGNIGTVQKSSLRFLKCCYTKLPAQAIPCSLAWVRPAEEHWTARAILHFQKLCGLKPLVGVVDEYIDGILNIFLCDTSSNEDVYFHHVLRTEGHAIVCRENAPSKGFRDFNPPALYTNASSAGDMVLTDLGHPAQQHYLNEDQEILQQAQQDINDGKCISYLKSAPKELLKDSKLSSLKTHKSCEEDPRWSILQPKDLKEENEDEVPTGMPCLESVTIGDDVWDENWLPLQAKMGKAGSPASQLFTSNLVGKKQYQTGGEMAQKDWCFSTSKDIWDDSWQPLGLANDVKGGIHTPEGPIAQEKNTSTTRIQQQPDLQYPLDSSTLPKLEEFYISLIKSQQSAERSQSEPASIQTHAGRAASKALSSTPAVGDSPENHSGSVESSPGSLKKEDVSNSRAEATAKDKSQGAIDQLSFILSPQHQISQKLYIPRSTATAVLGAAARLATSRSLLHWYPSVKGGKLEAERDGVK.

HTH OST-type domains lie at 7–80, 122–197, and 291–365; these read IQDC…KAIP, VPPI…LKKS, and VDPE…FDAD. One can recognise a Tudor domain in the interval 533–592; that stretch reads FIQPGHLCCVKISEDKWWYRVIIHRILGKKEVEVFYPDFGNIGTVQKSSLRFLKCCYTKL. Position 809 is a phosphoserine (Ser809). 2 disordered regions span residues 857–891 and 912–975; these read DVKG…YPLD and AERS…AKDK. Polar residues-rich tracts occupy residues 872 to 891 and 912 to 924; these read EKNT…YPLD and AERS…SIQT. Ser943 carries the phosphoserine modification. A compositionally biased stretch (polar residues) spans 946–956; it reads NHSGSVESSPG. Residues 958–975 show a composition bias toward basic and acidic residues; that stretch reads LKKEDVSNSRAEATAKDK.

It belongs to the TDRD5 family. As to expression, gonad-specific. Mainly expressed in testis. Present at low level in ovary (at protein level).

Its subcellular location is the cytoplasm. Required during spermiogenesis to participate in the repression transposable elements and prevent their mobilization, which is essential for the germline integrity. Probably acts via the piRNA metabolic process, which mediates the repression of transposable elements during meiosis by forming complexes composed of piRNAs and Piwi proteins and govern the methylation and subsequent repression of transposons. Required for chromatoid body (CB) assembly. This Mus musculus (Mouse) protein is Tudor domain-containing protein 5 (Tdrd5).